The following is a 206-amino-acid chain: High frequency lysogenization protein HflD homolog (206 aa).

The protein belongs to the HflD family.

It localises to the cytoplasm. The protein resides in the cell inner membrane. This Pseudomonas savastanoi pv. phaseolicola (strain 1448A / Race 6) (Pseudomonas syringae pv. phaseolicola (strain 1448A / Race 6)) protein is High frequency lysogenization protein HflD homolog.